Here is a 362-residue protein sequence, read N- to C-terminus: Prostaglandin F2-alpha receptor (362 aa).

At 1 to 31 (MSTNNSVQPVSPASELLSNTTCQLEEDLSIS) the chain is on the extracellular side. N-linked (GlcNAc...) asparagine glycosylation is found at Asn4 and Asn19. The helical transmembrane segment at 32-54 (FSIIFMTVGILSNSLAIAILMKA) threads the bilayer. Over 55 to 69 (YQRFRQKYKSSFLLL) the chain is Cytoplasmic. Residues 70–90 (ASALVITDFFGHLINGTIAVF) traverse the membrane as a helical segment. Residues 91–109 (VYASDKDWIYFDKSNILCS) are Extracellular-facing. The cysteines at positions 108 and 186 are disulfide-linked. The chain crosses the membrane as a helical span at residues 110-131 (IFGICMVFSGLCPLFLGSLMAI). The Cytoplasmic segment spans residues 132–152 (ERCIGVTKPIFHSTKITTKHV). The chain crosses the membrane as a helical span at residues 153-175 (KMMLSGVCFFAVFVALLPILGHR). Over 176-198 (DYKIQASRTWCFYKTDQIKDWED) the chain is Extracellular. The helical transmembrane segment at 199 to 224 (RFYLLLFAFLGLLALGISFVCNAITG) threads the bilayer. Topologically, residues 225 to 250 (ISLLKVKFRSQQHRQGRSHHFEMVIQ) are cytoplasmic. A helical membrane pass occupies residues 251 to 267 (LLGIMCVSCICWSPFLV). The Extracellular portion of the chain corresponds to 268–285 (TMASIGMNIQDFKDSCER). The helical transmembrane segment at 286–307 (TLFTLRMATWNQILDPWVYILL) threads the bilayer. Residues 308–362 (RKAVLRNLYVCTRRCCGVHVISLHVWELSSIKNSLKVAAISDLPVTEKVTQQTST) are Cytoplasmic-facing.

Belongs to the G-protein coupled receptor 1 family.

The protein resides in the cell membrane. In terms of biological role, receptor for prostaglandin F2-alpha (PGF2-alpha). The activity of this receptor is mediated by G proteins which activate a phosphatidylinositol-calcium second messenger system. Initiates luteolysis in the corpus luteum. In Ovis aries (Sheep), this protein is Prostaglandin F2-alpha receptor (PTGFR).